A 100-amino-acid polypeptide reads, in one-letter code: Large ribosomal subunit protein uL23 (100 aa).

The protein belongs to the universal ribosomal protein uL23 family. As to quaternary structure, part of the 50S ribosomal subunit. Contacts protein L29, and trigger factor when it is bound to the ribosome.

In terms of biological role, one of the early assembly proteins it binds 23S rRNA. One of the proteins that surrounds the polypeptide exit tunnel on the outside of the ribosome. Forms the main docking site for trigger factor binding to the ribosome. The protein is Large ribosomal subunit protein uL23 of Photobacterium profundum (strain SS9).